Here is a 61-residue protein sequence, read N- to C-terminus: Beta-insect depressant toxin BotIT5 (61 aa).

Residues 1–61 form the LCN-type CS-alpha/beta domain; sequence DGYIRKRDGC…TWKSETNTCG (61 aa). 4 disulfides stabilise this stretch: Cys10/Cys60, Cys14/Cys35, Cys21/Cys42, and Cys25/Cys44. Residue Gly61 is modified to Glycine amide.

It belongs to the long (4 C-C) scorpion toxin superfamily. Sodium channel inhibitor family. Beta subfamily. Expressed by the venom gland.

Its subcellular location is the secreted. Its function is as follows. Depressant insect beta-toxins cause a transient contraction paralysis followed by a slow flaccid paralysis. They bind voltage-independently at site-4 of sodium channels (Nav) and shift the voltage of activation toward more negative potentials thereby affecting sodium channel activation and promoting spontaneous and repetitive firing. This toxin is active only on insects. In Buthus occitanus tunetanus (Common European scorpion), this protein is Beta-insect depressant toxin BotIT5.